We begin with the raw amino-acid sequence, 365 residues long: Flagellar P-ring protein (365 aa).

An N-terminal signal peptide occupies residues 1-20 (MKLPHFFVLAALVLSGAAHA).

The protein belongs to the FlgI family. The basal body constitutes a major portion of the flagellar organelle and consists of four rings (L,P,S, and M) mounted on a central rod.

The protein localises to the periplasm. It is found in the bacterial flagellum basal body. In terms of biological role, assembles around the rod to form the L-ring and probably protects the motor/basal body from shearing forces during rotation. This is Flagellar P-ring protein from Thiobacillus denitrificans (strain ATCC 25259 / T1).